The following is a 152-amino-acid chain: SsrA-binding protein (152 aa).

The segment covering 132–142 (REAIKKRDVSD) has biased composition (basic and acidic residues). The tract at residues 132 to 152 (REAIKKRDVSDQIRSSLRRSR) is disordered.

Belongs to the SmpB family.

It is found in the cytoplasm. Required for rescue of stalled ribosomes mediated by trans-translation. Binds to transfer-messenger RNA (tmRNA), required for stable association of tmRNA with ribosomes. tmRNA and SmpB together mimic tRNA shape, replacing the anticodon stem-loop with SmpB. tmRNA is encoded by the ssrA gene; the 2 termini fold to resemble tRNA(Ala) and it encodes a 'tag peptide', a short internal open reading frame. During trans-translation Ala-aminoacylated tmRNA acts like a tRNA, entering the A-site of stalled ribosomes, displacing the stalled mRNA. The ribosome then switches to translate the ORF on the tmRNA; the nascent peptide is terminated with the 'tag peptide' encoded by the tmRNA and targeted for degradation. The ribosome is freed to recommence translation, which seems to be the essential function of trans-translation. This Bdellovibrio bacteriovorus (strain ATCC 15356 / DSM 50701 / NCIMB 9529 / HD100) protein is SsrA-binding protein.